Here is a 174-residue protein sequence, read N- to C-terminus: Secretory-abundant heat soluble protein 2 (174 aa).

The N-terminal stretch at 1–19 (MHRFVLALVVFAGAAIVWA) is a signal peptide. The segment at 30–60 (EWTGKPWMGKWESDPSKDENVEEFKKKLQLP) is SAHS-c1. The SAHS-c2 stretch occupies residues 77-105 (YKKGDEYHHKIIINDAHYKNDIVFKLGQE). Asn111 carries N-linked (GlcNAc...) asparagine glycosylation. Residues 118 to 172 (KYEDKDGALVGSVHYTGTKEQSLDKTINNVFKLEGDHLVKTSTIEGVTMKRHYNK) form an SAHS-c3 region.

The protein belongs to the Secretory-abundant heat soluble protein (SAHS) family.

The protein localises to the secreted. Secreted heat soluble protein acting as a molecular shield in water-deficient condition. Tardigrade-specific intrinsically disordered proteins (TDPs) are essential for desiccation tolerance by forming non-crystalline amorphous solids upon desiccation, and this vitrified state mirrors their protective capabilities. This Ramazzottius varieornatus (Water bear) protein is Secretory-abundant heat soluble protein 2.